The sequence spans 542 residues: Peptide chain release factor 3 (542 aa).

In terms of domain architecture, tr-type G spans E14 to A283. GTP contacts are provided by residues S23–T30, D91–H95, and N145–D148.

This sequence belongs to the TRAFAC class translation factor GTPase superfamily. Classic translation factor GTPase family. PrfC subfamily.

The protein localises to the cytoplasm. Functionally, increases the formation of ribosomal termination complexes and stimulates activities of RF-1 and RF-2. It binds guanine nucleotides and has strong preference for UGA stop codons. It may interact directly with the ribosome. The stimulation of RF-1 and RF-2 is significantly reduced by GTP and GDP, but not by GMP. The sequence is that of Peptide chain release factor 3 from Cyanothece sp. (strain PCC 7425 / ATCC 29141).